Here is a 118-residue protein sequence, read N- to C-terminus: Large ribosomal subunit protein bL20 (118 aa).

The protein belongs to the bacterial ribosomal protein bL20 family.

Functionally, binds directly to 23S ribosomal RNA and is necessary for the in vitro assembly process of the 50S ribosomal subunit. It is not involved in the protein synthesizing functions of that subunit. This is Large ribosomal subunit protein bL20 from Nostoc punctiforme (strain ATCC 29133 / PCC 73102).